The primary structure comprises 211 residues: Transcription factor E (211 aa).

One can recognise an HTH TFE/IIEalpha-type domain in the interval 10–130; the sequence is GNPAIYQYLL…LWLMRMDHMN (121 aa).

The protein belongs to the TFE family. Monomer. Interaction with RNA polymerase subunits RpoF and RpoE is necessary for Tfe stimulatory transcription activity. Able to interact with Tbp and RNA polymerase in the absence of DNA promoter. Interacts both with the preinitiation and elongation complexes.

Its function is as follows. Transcription factor that plays a role in the activation of archaeal genes transcribed by RNA polymerase. Facilitates transcription initiation by enhancing TATA-box recognition by TATA-box-binding protein (Tbp), and transcription factor B (Tfb) and RNA polymerase recruitment. Not absolutely required for transcription in vitro, but particularly important in cases where Tbp or Tfb function is not optimal. It dynamically alters the nucleic acid-binding properties of RNA polymerases by stabilizing the initiation complex and destabilizing elongation complexes. Seems to translocate with the RNA polymerase following initiation and acts by binding to the non template strand of the transcription bubble in elongation complexes. In Methanocorpusculum labreanum (strain ATCC 43576 / DSM 4855 / Z), this protein is Transcription factor E.